An 88-amino-acid chain; its full sequence is Large ribosomal subunit protein bL31B (88 aa).

This sequence belongs to the bacterial ribosomal protein bL31 family. Type B subfamily. As to quaternary structure, part of the 50S ribosomal subunit.

This is Large ribosomal subunit protein bL31B from Pasteurella multocida (strain Pm70).